Here is a 151-residue protein sequence, read N- to C-terminus: MKVILIKDCKDGKANTIIEVSDGYGSNFLINKGFALPYNEKTKKQLEKRLSDLTANEMEMRQSALELKEKLEKESLKYELEANIDANSNLNVHGAVSTKDIVKSLVKLGYKLDKYAVQKVHLVGRGVHLIDVIVYKDIVAKLKVDIIINVK.

Belongs to the bacterial ribosomal protein bL9 family.

In terms of biological role, binds to the 23S rRNA. The protein is Large ribosomal subunit protein bL9 of Mycoplasmopsis agalactiae (strain NCTC 10123 / CIP 59.7 / PG2) (Mycoplasma agalactiae).